The following is a 79-amino-acid chain: Acyl carrier protein (79 aa).

In terms of domain architecture, Carrier spans Ser-2–Leu-77. Ser-37 carries the post-translational modification O-(pantetheine 4'-phosphoryl)serine.

This sequence belongs to the acyl carrier protein (ACP) family. Post-translationally, 4'-phosphopantetheine is transferred from CoA to a specific serine of apo-ACP by AcpS. This modification is essential for activity because fatty acids are bound in thioester linkage to the sulfhydryl of the prosthetic group.

It is found in the cytoplasm. It functions in the pathway lipid metabolism; fatty acid biosynthesis. Functionally, carrier of the growing fatty acid chain in fatty acid biosynthesis. The protein is Acyl carrier protein of Halorhodospira halophila (strain DSM 244 / SL1) (Ectothiorhodospira halophila (strain DSM 244 / SL1)).